The chain runs to 423 residues: Glutamyl-tRNA reductase (423 aa).

Residues 49–52 (TCNR), Ser111, 116–118 (EPQ), and Gln122 each bind substrate. Cys50 functions as the Nucleophile in the catalytic mechanism. Residue 191-196 (GAGEMS) coordinates NADP(+).

Belongs to the glutamyl-tRNA reductase family. Homodimer.

The enzyme catalyses (S)-4-amino-5-oxopentanoate + tRNA(Glu) + NADP(+) = L-glutamyl-tRNA(Glu) + NADPH + H(+). It functions in the pathway porphyrin-containing compound metabolism; protoporphyrin-IX biosynthesis; 5-aminolevulinate from L-glutamyl-tRNA(Glu): step 1/2. Its function is as follows. Catalyzes the NADPH-dependent reduction of glutamyl-tRNA(Glu) to glutamate 1-semialdehyde (GSA). The polypeptide is Glutamyl-tRNA reductase (Syntrophus aciditrophicus (strain SB)).